The primary structure comprises 308 residues: Porphobilinogen deaminase (308 aa).

Cys243 carries the S-(dipyrrolylmethanemethyl)cysteine modification.

This sequence belongs to the HMBS family. Monomer. It depends on dipyrromethane as a cofactor.

The catalysed reaction is 4 porphobilinogen + H2O = hydroxymethylbilane + 4 NH4(+). It functions in the pathway porphyrin-containing compound metabolism; protoporphyrin-IX biosynthesis; coproporphyrinogen-III from 5-aminolevulinate: step 2/4. Functionally, tetrapolymerization of the monopyrrole PBG into the hydroxymethylbilane pre-uroporphyrinogen in several discrete steps. The protein is Porphobilinogen deaminase of Mesorhizobium japonicum (strain LMG 29417 / CECT 9101 / MAFF 303099) (Mesorhizobium loti (strain MAFF 303099)).